We begin with the raw amino-acid sequence, 429 residues long: Probable M18 family aminopeptidase 2 (429 aa).

Positions 82, 156, and 401 each coordinate Zn(2+).

Belongs to the peptidase M18 family. Zn(2+) serves as cofactor.

In Pseudomonas syringae pv. tomato (strain ATCC BAA-871 / DC3000), this protein is Probable M18 family aminopeptidase 2.